Here is a 443-residue protein sequence, read N- to C-terminus: Protein king tubby (443 aa).

Disordered stretches follow at residues Thr-57–Arg-80 and His-98–Val-191. The span at Val-67–Arg-80 shows a compositional bias: polar residues. Low complexity predominate over residues Gln-113 to Gln-128. Phosphoserine is present on Ser-136. A compositionally biased stretch (gly residues) spans Asn-177–Glu-186.

It belongs to the TUB family.

The protein localises to the cytoplasm. Its subcellular location is the nucleus. The protein resides in the cell projection. It localises to the cilium membrane. It is found in the rhabdomere. The polypeptide is Protein king tubby (Drosophila sechellia (Fruit fly)).